A 153-amino-acid polypeptide reads, in one-letter code: 6,7-dimethyl-8-ribityllumazine synthase (153 aa).

5-amino-6-(D-ribitylamino)uracil is bound by residues Phe22, 56–58, and 80–82; these read AFE and AVI. Residue 85 to 86 coordinates (2S)-2-hydroxy-3-oxobutyl phosphate; the sequence is AT. His88 acts as the Proton donor in catalysis. Phe113 contributes to the 5-amino-6-(D-ribitylamino)uracil binding site. Arg127 provides a ligand contact to (2S)-2-hydroxy-3-oxobutyl phosphate.

This sequence belongs to the DMRL synthase family.

It carries out the reaction (2S)-2-hydroxy-3-oxobutyl phosphate + 5-amino-6-(D-ribitylamino)uracil = 6,7-dimethyl-8-(1-D-ribityl)lumazine + phosphate + 2 H2O + H(+). It functions in the pathway cofactor biosynthesis; riboflavin biosynthesis; riboflavin from 2-hydroxy-3-oxobutyl phosphate and 5-amino-6-(D-ribitylamino)uracil: step 1/2. In terms of biological role, catalyzes the formation of 6,7-dimethyl-8-ribityllumazine by condensation of 5-amino-6-(D-ribitylamino)uracil with 3,4-dihydroxy-2-butanone 4-phosphate. This is the penultimate step in the biosynthesis of riboflavin. This is 6,7-dimethyl-8-ribityllumazine synthase from Clostridium tetani (strain Massachusetts / E88).